A 748-amino-acid chain; its full sequence is Glucans biosynthesis glucosyltransferase H (748 aa).

The next 7 helical transmembrane spans lie at 85–107, 127–149, 443–465, 494–516, 529–551, 587–606, and 608–630; these read LIVR…GYGM, FLVL…FVLL, GIGS…LISL, AWVF…LVLI, GRVL…CMMI, LAGP…SVSL, and LLLW…IMTS.

Belongs to the glycosyltransferase 2 family. OpgH subfamily.

It is found in the cell inner membrane. Its pathway is glycan metabolism; osmoregulated periplasmic glucan (OPG) biosynthesis. Its function is as follows. Involved in the biosynthesis of osmoregulated periplasmic glucans (OPGs). This chain is Glucans biosynthesis glucosyltransferase H, found in Bradyrhizobium diazoefficiens (strain JCM 10833 / BCRC 13528 / IAM 13628 / NBRC 14792 / USDA 110).